The sequence spans 162 residues: Ribosome-binding factor A (162 aa).

The segment at 123-162 is disordered; it reads VARVAAGASPAGDPDPYKEPRVEDADDAEVDEPSRSRQAD. Positions 125 to 136 are enriched in low complexity; it reads RVAAGASPAGDP.

This sequence belongs to the RbfA family. In terms of assembly, monomer. Binds 30S ribosomal subunits, but not 50S ribosomal subunits or 70S ribosomes.

It is found in the cytoplasm. In terms of biological role, one of several proteins that assist in the late maturation steps of the functional core of the 30S ribosomal subunit. Associates with free 30S ribosomal subunits (but not with 30S subunits that are part of 70S ribosomes or polysomes). Required for efficient processing of 16S rRNA. May interact with the 5'-terminal helix region of 16S rRNA. The protein is Ribosome-binding factor A of Rhodococcus opacus (strain B4).